Reading from the N-terminus, the 126-residue chain is Small ribosomal subunit protein eS8 (126 aa).

The span at 1 to 10 (MAIWQGSSLR) shows a compositional bias: polar residues. Positions 1–35 (MAIWQGSSLRKPSGARSRRNKNKRNAEFGRNPAET) are disordered.

It belongs to the eukaryotic ribosomal protein eS8 family. As to quaternary structure, part of the 30S ribosomal subunit.

This chain is Small ribosomal subunit protein eS8, found in Methanosphaera stadtmanae (strain ATCC 43021 / DSM 3091 / JCM 11832 / MCB-3).